Reading from the N-terminus, the 227-residue chain is Cytochrome c oxidase subunit 2 (227 aa).

Residues 1–14 (MAYPAQMGFQDATS) are Mitochondrial intermembrane-facing. A helical transmembrane segment spans residues 15 to 45 (PIMEELLYFHDHTLMIVFMISSLVLYTISLM). At 46-59 (LTTSLTHTNTMNAQ) the chain is on the mitochondrial matrix side. A helical membrane pass occupies residues 60–87 (EVETVWTILPAIICILIALPSLRILYMM). The Mitochondrial intermembrane segment spans residues 88-227 (DEINNPSLTI…YFEKWLLTML (140 aa)). Residues His-161, Cys-196, Glu-198, Cys-200, His-204, and Met-207 each contribute to the Cu cation site. Mg(2+) is bound at residue Glu-198. A Phosphotyrosine modification is found at Tyr-218.

This sequence belongs to the cytochrome c oxidase subunit 2 family. Component of the cytochrome c oxidase (complex IV, CIV), a multisubunit enzyme composed of 14 subunits. The complex is composed of a catalytic core of 3 subunits MT-CO1, MT-CO2 and MT-CO3, encoded in the mitochondrial DNA, and 11 supernumerary subunits COX4I, COX5A, COX5B, COX6A, COX6B, COX6C, COX7A, COX7B, COX7C, COX8 and NDUFA4, which are encoded in the nuclear genome. The complex exists as a monomer or a dimer and forms supercomplexes (SCs) in the inner mitochondrial membrane with NADH-ubiquinone oxidoreductase (complex I, CI) and ubiquinol-cytochrome c oxidoreductase (cytochrome b-c1 complex, complex III, CIII), resulting in different assemblies (supercomplex SCI(1)III(2)IV(1) and megacomplex MCI(2)III(2)IV(2)). Found in a complex with TMEM177, COA6, COX18, COX20, SCO1 and SCO2. Interacts with TMEM177 in a COX20-dependent manner. Interacts with COX20. Interacts with COX16. The cofactor is Cu cation.

It localises to the mitochondrion inner membrane. The catalysed reaction is 4 Fe(II)-[cytochrome c] + O2 + 8 H(+)(in) = 4 Fe(III)-[cytochrome c] + 2 H2O + 4 H(+)(out). In terms of biological role, component of the cytochrome c oxidase, the last enzyme in the mitochondrial electron transport chain which drives oxidative phosphorylation. The respiratory chain contains 3 multisubunit complexes succinate dehydrogenase (complex II, CII), ubiquinol-cytochrome c oxidoreductase (cytochrome b-c1 complex, complex III, CIII) and cytochrome c oxidase (complex IV, CIV), that cooperate to transfer electrons derived from NADH and succinate to molecular oxygen, creating an electrochemical gradient over the inner membrane that drives transmembrane transport and the ATP synthase. Cytochrome c oxidase is the component of the respiratory chain that catalyzes the reduction of oxygen to water. Electrons originating from reduced cytochrome c in the intermembrane space (IMS) are transferred via the dinuclear copper A center (CU(A)) of subunit 2 and heme A of subunit 1 to the active site in subunit 1, a binuclear center (BNC) formed by heme A3 and copper B (CU(B)). The BNC reduces molecular oxygen to 2 water molecules using 4 electrons from cytochrome c in the IMS and 4 protons from the mitochondrial matrix. This Daubentonia madagascariensis (Aye-aye) protein is Cytochrome c oxidase subunit 2 (MT-CO2).